A 347-amino-acid chain; its full sequence is Dihydroorotase (347 aa).

Zn(2+) is bound by residues histidine 13 and histidine 15. Substrate is bound by residues 15 to 17 and asparagine 41; that span reads HLR. Zn(2+) contacts are provided by lysine 99, histidine 136, and histidine 174. Residue lysine 99 is modified to N6-carboxylysine. Histidine 136 provides a ligand contact to substrate. Leucine 219 is a substrate binding site. Aspartate 247 is a binding site for Zn(2+). The active site involves aspartate 247. Residues histidine 251 and alanine 263 each coordinate substrate.

The protein belongs to the metallo-dependent hydrolases superfamily. DHOase family. Class II DHOase subfamily. Homodimer. Zn(2+) is required as a cofactor.

The enzyme catalyses (S)-dihydroorotate + H2O = N-carbamoyl-L-aspartate + H(+). Its pathway is pyrimidine metabolism; UMP biosynthesis via de novo pathway; (S)-dihydroorotate from bicarbonate: step 3/3. In terms of biological role, catalyzes the reversible cyclization of carbamoyl aspartate to dihydroorotate. The sequence is that of Dihydroorotase from Rhizobium meliloti (strain 1021) (Ensifer meliloti).